Reading from the N-terminus, the 147-residue chain is NAD(P)H-quinone oxidoreductase subunit N (147 aa).

This sequence belongs to the complex I NdhN subunit family. As to quaternary structure, NDH-1 can be composed of about 15 different subunits; different subcomplexes with different compositions have been identified which probably have different functions.

It localises to the cellular thylakoid membrane. The enzyme catalyses a plastoquinone + NADH + (n+1) H(+)(in) = a plastoquinol + NAD(+) + n H(+)(out). It catalyses the reaction a plastoquinone + NADPH + (n+1) H(+)(in) = a plastoquinol + NADP(+) + n H(+)(out). NDH-1 shuttles electrons from an unknown electron donor, via FMN and iron-sulfur (Fe-S) centers, to quinones in the respiratory and/or the photosynthetic chain. The immediate electron acceptor for the enzyme in this species is believed to be plastoquinone. Couples the redox reaction to proton translocation, and thus conserves the redox energy in a proton gradient. Cyanobacterial NDH-1 also plays a role in inorganic carbon-concentration. This is NAD(P)H-quinone oxidoreductase subunit N from Synechococcus sp. (strain JA-2-3B'a(2-13)) (Cyanobacteria bacterium Yellowstone B-Prime).